The following is a 621-amino-acid chain: (-)-beta-phellandrene synthase 1, chloroplastic (621 aa).

Residues 1–49 (MALALVSVAPLVSMRRSLFSSPYELKSIDKTIPNLVMCRKRMLGRPSIR) constitute a chloroplast transit peptide. Asp372, Asp376, and Asp524 together coordinate Mg(2+). Positions 372–376 (DDIYD) match the DDXXD motif motif.

The protein belongs to the terpene synthase family. Tpsd subfamily. Mg(2+) serves as cofactor. The cofactor is Mn(2+).

Its subcellular location is the plastid. It localises to the chloroplast. It carries out the reaction (2E)-geranyl diphosphate = (-)-beta-phellandrene + diphosphate. It functions in the pathway terpene metabolism; oleoresin biosynthesis. It participates in secondary metabolite biosynthesis; terpenoid biosynthesis. Monoterpene synthase (TPS) involved in the biosynthesis of monoterpene natural products included in conifer oleoresin secretions and volatile emissions; these compounds contribute to biotic and abiotic stress defense against herbivores and pathogens. Catalyzes the conversion of (2E)-geranyl diphosphate (GPP) to (-)-beta-phellandrene. The chain is (-)-beta-phellandrene synthase 1, chloroplastic from Pinus banksiana (Jack pine).